We begin with the raw amino-acid sequence, 295 residues long: MHIPDGYLDLSIAGLFYILSIAVLGYSIYRLRGQKLTSLFGIVAAAIFAAQMLNWPIPGGTSAHFVGGALAGILLGPYAGALAMAVVLTIQCLVFADGGITALGANVWNMAIVNVFVGYYVYRAIERFNRSAAAFIAGWIGITLAAIFAGIEIGISTSFGYGLKVTLPVMGTWHALLGLVEGTITAGVVSYIAAARPDVIEQKAAPGKLALAVIAAMIAVSPLFAYAAELVGYSEPLENAAAMLGLEENPIYEGLLPDYTLPGLDPYAGTLIAGIVGTVIVLALGFALTRYARTA.

The next 8 membrane-spanning stretches (helical) occupy residues 8–28 (LDLSIAGLFYILSIAVLGYSI), 39–59 (LFGIVAAAIFAAQMLNWPIPG), 70–90 (LAGILLGPYAGALAMAVVLTI), 98–118 (GGITALGANVWNMAIVNVFVG), 135–155 (FIAGWIGITLAAIFAGIEIGI), 175–195 (ALLGLVEGTITAGVVSYIAAA), 211–231 (LAVIAAMIAVSPLFAYAAELV), and 268–288 (AGTLIAGIVGTVIVLALGFAL).

The protein belongs to the CbiM family. NikM subfamily.

The protein resides in the cell membrane. Its function is as follows. May be involved in nickel transport. The protein is Putative fused nickel transport protein NikMN of Archaeoglobus fulgidus (strain ATCC 49558 / DSM 4304 / JCM 9628 / NBRC 100126 / VC-16).